The primary structure comprises 203 residues: DNA-directed RNA polymerase III subunit rpc8 (203 aa).

The protein belongs to the eukaryotic RPB7/RPC8 RNA polymerase subunit family. Component of the RNA polymerase III (Pol III) complex consisting of 17 subunits. Rpc25/rpc8 and rpc17/rpc9 form a Pol III subcomplex.

It is found in the cytoplasm. The protein resides in the nucleus. Functionally, DNA-dependent RNA polymerase catalyzes the transcription of DNA into RNA using the four ribonucleoside triphosphates as substrates. Specific peripheric component of RNA polymerase III which synthesizes small RNAs, such as 5S rRNA and tRNA. This chain is DNA-directed RNA polymerase III subunit rpc8 (rpc25), found in Schizosaccharomyces pombe (strain 972 / ATCC 24843) (Fission yeast).